Here is a 61-residue protein sequence, read N- to C-terminus: Small ribosomal subunit protein uS14 (61 aa).

Zn(2+)-binding residues include cysteine 24, cysteine 27, cysteine 40, and cysteine 43.

It belongs to the universal ribosomal protein uS14 family. Zinc-binding uS14 subfamily. Part of the 30S ribosomal subunit. Contacts proteins S3 and S10. It depends on Zn(2+) as a cofactor.

In terms of biological role, binds 16S rRNA, required for the assembly of 30S particles and may also be responsible for determining the conformation of the 16S rRNA at the A site. The protein is Small ribosomal subunit protein uS14 of Aliarcobacter butzleri (strain RM4018) (Arcobacter butzleri).